Here is a 252-residue protein sequence, read N- to C-terminus: 2-succinyl-6-hydroxy-2,4-cyclohexadiene-1-carboxylate synthase (252 aa).

Belongs to the AB hydrolase superfamily. MenH family. In terms of assembly, monomer.

It carries out the reaction 5-enolpyruvoyl-6-hydroxy-2-succinyl-cyclohex-3-ene-1-carboxylate = (1R,6R)-6-hydroxy-2-succinyl-cyclohexa-2,4-diene-1-carboxylate + pyruvate. It functions in the pathway quinol/quinone metabolism; 1,4-dihydroxy-2-naphthoate biosynthesis; 1,4-dihydroxy-2-naphthoate from chorismate: step 3/7. Its pathway is quinol/quinone metabolism; menaquinone biosynthesis. Catalyzes a proton abstraction reaction that results in 2,5-elimination of pyruvate from 2-succinyl-5-enolpyruvyl-6-hydroxy-3-cyclohexene-1-carboxylate (SEPHCHC) and the formation of 2-succinyl-6-hydroxy-2,4-cyclohexadiene-1-carboxylate (SHCHC). This Shigella boydii serotype 4 (strain Sb227) protein is 2-succinyl-6-hydroxy-2,4-cyclohexadiene-1-carboxylate synthase.